A 360-amino-acid chain; its full sequence is Phospho-N-acetylmuramoyl-pentapeptide-transferase (360 aa).

Transmembrane regions (helical) follow at residues Arg-25–Ile-45, Thr-73–Leu-93, Tyr-97–Tyr-117, Trp-132–Ala-152, Val-168–Ser-188, Gly-199–Ser-219, Ala-236–Phe-256, Val-263–Ile-283, Ile-288–Val-308, and Val-338–Lys-358.

This sequence belongs to the glycosyltransferase 4 family. MraY subfamily. It depends on Mg(2+) as a cofactor.

It localises to the cell inner membrane. The enzyme catalyses UDP-N-acetyl-alpha-D-muramoyl-L-alanyl-gamma-D-glutamyl-meso-2,6-diaminopimeloyl-D-alanyl-D-alanine + di-trans,octa-cis-undecaprenyl phosphate = di-trans,octa-cis-undecaprenyl diphospho-N-acetyl-alpha-D-muramoyl-L-alanyl-D-glutamyl-meso-2,6-diaminopimeloyl-D-alanyl-D-alanine + UMP. It participates in cell wall biogenesis; peptidoglycan biosynthesis. Its function is as follows. Catalyzes the initial step of the lipid cycle reactions in the biosynthesis of the cell wall peptidoglycan: transfers peptidoglycan precursor phospho-MurNAc-pentapeptide from UDP-MurNAc-pentapeptide onto the lipid carrier undecaprenyl phosphate, yielding undecaprenyl-pyrophosphoryl-MurNAc-pentapeptide, known as lipid I. This is Phospho-N-acetylmuramoyl-pentapeptide-transferase from Pseudomonas fluorescens (strain ATCC BAA-477 / NRRL B-23932 / Pf-5).